The following is a 380-amino-acid chain: Acyl-coenzyme A diphosphatase SCS3 (380 aa).

Topologically, residues 1–7 (MSSKWFN) are cytoplasmic. A helical transmembrane segment spans residues 8–28 (AIHLLVCPLTVLVGYLMNAYG). Over 29–43 (YGAALQATLNKDGLV) the chain is Lumenal. Residues 44–64 (NAMLVKKGWFWTSLVGWWCII) form a helical membrane-spanning segment. Residues 65–88 (RYRAVPGATGRDRRHIVQSFKRYA) lie on the Cytoplasmic side of the membrane. The helical transmembrane segment at 89 to 109 (ILTVWWYVFTQGIWFGVGPIM) threads the bilayer. The Lumenal portion of the chain corresponds to 110-233 (DLVFVYTGGH…GHWAGGHDPS (124 aa)). A helical membrane pass occupies residues 234 to 254 (GHVFLATLMCMFLLGELRVFG). Residue His-235 is part of the active site. Residues 255–325 (RRALAHLYAQ…LTRCIACDHP (71 aa)) lie on the Cytoplasmic side of the membrane. Residues 326-346 (VIILLTLLVTWLWQLLLTAVA) traverse the membrane as a helical segment. Residues 347 to 356 (SRFHTVREHM) lie on the Lumenal side of the membrane. The active site involves His-350. The helical transmembrane segment at 357–377 (SGLLAAYIVTGLVYARDAAAL) threads the bilayer. Over 378–380 (RPV) the chain is Cytoplasmic.

It belongs to the FIT family. Fungal FIT2B/SCS3 subfamily.

It is found in the endoplasmic reticulum membrane. The enzyme catalyses an acyl-CoA + H2O = an acyl-4'-phosphopantetheine + adenosine 3',5'-bisphosphate + 2 H(+). It carries out the reaction (9Z)-octadecenoyl-CoA + H2O = S-(9Z-octadecenoyl)-4'-phosphopantetheine + adenosine 3',5'-bisphosphate + 2 H(+). It catalyses the reaction (5Z,8Z,11Z,14Z)-eicosatetraenoyl-CoA + H2O = S-(5Z,8Z,11Z,14Z-eicosatetraenoyl)-4'-phosphopantetheine + adenosine 3',5'-bisphosphate + 2 H(+). The catalysed reaction is hexadecanoyl-CoA + H2O = S-hexadecanoyl-4'-phosphopantetheine + adenosine 3',5'-bisphosphate + 2 H(+). Functionally, fatty acyl-coenzyme A (CoA) diphosphatase that hydrolyzes fatty acyl-CoA to yield acyl-4'-phosphopantetheine and adenosine 3',5'-bisphosphate. Preferentially hydrolyzes unsaturated long-chain acyl-CoA substrates in the endoplasmic reticulum (ER) lumen. This catalytic activity is required for maintaining ER structure and for lipid droplets (LDs) biogenesis, which are lipid storage organelles involved in maintaining lipid and energy homeostasis. May directly bind to diacylglycerol (DAGs) and triacylglycerol, which is also important for LD biogenesis. May support directional budding of nacent LDs from the ER into the cytosol by reducing DAG levels at sites of LD formation. May play a role in the regulation of cell morphology and cytoskeletal organization. Involved in phospholipid biosynthesis. This chain is Acyl-coenzyme A diphosphatase SCS3, found in Saccharomyces cerevisiae (strain ATCC 204508 / S288c) (Baker's yeast).